A 195-amino-acid polypeptide reads, in one-letter code: Phosphoheptose isomerase (195 aa).

Residues 37 to 195 (ISDSFKQHGK…IEFEMAKIRQ (159 aa)) enclose the SIS domain. A substrate-binding site is contributed by 52 to 54 (NGG). Residues His-61 and Glu-65 each contribute to the Zn(2+) site. Residues Glu-65, 93–94 (ND), 119–121 (STS), Ser-124, and Gln-172 each bind substrate. Zn(2+) contacts are provided by Gln-172 and His-180.

Belongs to the SIS family. GmhA subfamily. As to quaternary structure, homotetramer. It depends on Zn(2+) as a cofactor.

The protein resides in the cytoplasm. It catalyses the reaction 2 D-sedoheptulose 7-phosphate = D-glycero-alpha-D-manno-heptose 7-phosphate + D-glycero-beta-D-manno-heptose 7-phosphate. It participates in carbohydrate biosynthesis; D-glycero-D-manno-heptose 7-phosphate biosynthesis; D-glycero-alpha-D-manno-heptose 7-phosphate and D-glycero-beta-D-manno-heptose 7-phosphate from sedoheptulose 7-phosphate: step 1/1. Functionally, catalyzes the isomerization of sedoheptulose 7-phosphate in D-glycero-D-manno-heptose 7-phosphate. In Histophilus somni (strain 2336) (Haemophilus somnus), this protein is Phosphoheptose isomerase.